Reading from the N-terminus, the 651-residue chain is MNKLRQSFRRKKDVYVPEASRPHQWQTDEEGVRTGKCSFPVKYLGHVEVDESRGMHICEDAVKRLKAERKFFKGFFGKTGKKAVKAVLWVSADGLRVVDEKTKDLIVDQTIEKVSFCAPDRNFDRAFSYICRDGTTRRWICHCFMAVKDTGERLSHAVGCAFAACLERKQKREKECGVTATFDASRTTFTREGSFRVTTATEQAEREEIMKQMQDAKKAETDKIVVGSSVAPGNTAPSPSSPTSPTSDATTSLEMNNPHAIPRRHAPIEQLARQGSFRGFPALSQKMSPFKRQLSLRINELPSTMQRKTDFPIKNAVPEVEGEAESISSLCSQITNAFSTPEDPFSSAPMTKPVTVVAPQSPTFQANGTDSAFHVLAKPAHTALAPVAMPVRETNPWAHAPDAANKEIAATCSGTEWGQSSGAASPGLFQAGHRRTPSEADRWLEEVSKSVRAQQPQASAAPLQPVLQPPPPTAISQPASPFQGNAFLTSQPVPVGVVPALQPAFVPAQSYPVANGMPYPAPNVPVVGITPSQMVANVFGTAGHPQAAHPHQSPSLVRQQTFPHYEASSATTSPFFKPPAQHLNGSAAFNGVDDGRLASADRHTEVPTGTCPVDPFEAQWAALENKSKQRTNPSPTNPFSSDLQKTFEIEL.

Positions 33–193 (RTGKCSFPVK…ASRTTFTREG (161 aa)) constitute a PID domain. The residue at position 102 (threonine 102) is a Phosphothreonine; by AAK1. The residue at position 194 (serine 194) is a Phosphoserine. Residues 228 to 255 (SSVAPGNTAPSPSSPTSPTSDATTSLEM) are disordered. Residues 235–252 (TAPSPSSPTSPTSDATTS) show a composition bias toward low complexity. Threonine 243 carries the phosphothreonine modification. Residue serine 244 is modified to Phosphoserine. Serine 276 and serine 295 each carry phosphoserine; by CaMK1. Disordered regions lie at residues 419–483 (QSSG…SPFQ) and 623–651 (LENK…EIEL). Residue serine 425 is modified to Phosphoserine. Phosphothreonine is present on threonine 436. A compositionally biased stretch (basic and acidic residues) spans 436–449 (TPSEADRWLEEVSK). A Phosphoserine modification is found at serine 438. The segment covering 453–466 (AQQPQASAAPLQPV) has biased composition (low complexity). The segment covering 630–644 (RTNPSPTNPFSSDLQ) has biased composition (polar residues). A Phosphoserine modification is found at serine 634.

Interacts with SIAH1. Interacts with LNX. Interacts with CDH1. Interacts with TFAP2A and TFAP2B. Interacts with RALBP1 in a complex also containing EPN1 and TFAP2A during interphase and mitosis. Interacts with AAK1. May interact with DUOXA1. Phosphorylated on Ser-276 and Ser-295 by CaMK1. In terms of processing, isoform 1 and isoform 2 are ubiquitinated by LNX leading to their subsequent proteasomal degradation. Ubiquitinated; mediated by SIAH1 and leading to its subsequent proteasomal degradation.

It is found in the cell membrane. Its subcellular location is the endosome membrane. Functionally, regulates clathrin-mediated receptor endocytosis. Plays a role in the process of neurogenesis. Required throughout embryonic neurogenesis to maintain neural progenitor cells, also called radial glial cells (RGCs), by allowing their daughter cells to choose progenitor over neuronal cell fate. Not required for the proliferation of neural progenitor cells before the onset of neurogenesis. Also involved postnatally in the subventricular zone (SVZ) neurogenesis by regulating SVZ neuroblasts survival and ependymal wall integrity. May also mediate local repair of brain ventricular wall damage. The chain is Protein numb homolog from Homo sapiens (Human).